We begin with the raw amino-acid sequence, 225 residues long: Isoprenyl transferase 1 (225 aa).

Residue Asp-3 is part of the active site. Position 3 (Asp-3) interacts with Mg(2+). Substrate is bound by residues Gly-4–Arg-7, Trp-8, His-21, and Ser-49–Glu-51. Asn-52 (proton acceptor) is an active-site residue. Substrate-binding positions include Arg-55, Arg-174, and Arg-180–Ser-182. Position 193 (Glu-193) interacts with Mg(2+).

Belongs to the UPP synthase family. In terms of assembly, homodimer. It depends on Mg(2+) as a cofactor.

Catalyzes the condensation of isopentenyl diphosphate (IPP) with allylic pyrophosphates generating different type of terpenoids. The sequence is that of Isoprenyl transferase 1 from Corynebacterium glutamicum (strain ATCC 13032 / DSM 20300 / JCM 1318 / BCRC 11384 / CCUG 27702 / LMG 3730 / NBRC 12168 / NCIMB 10025 / NRRL B-2784 / 534).